The following is a 101-amino-acid chain: Small ribosomal subunit protein uS14 (101 aa).

The interval 46–72 (FELNRQPRDASPVRVRNRDSRDGRPRG) is disordered. Residues 61–70 (RNRDSRDGRP) show a composition bias toward basic and acidic residues.

This sequence belongs to the universal ribosomal protein uS14 family. In terms of assembly, part of the 30S ribosomal subunit. Contacts proteins S3 and S10.

Functionally, binds 16S rRNA, required for the assembly of 30S particles and may also be responsible for determining the conformation of the 16S rRNA at the A site. This is Small ribosomal subunit protein uS14 from Corynebacterium diphtheriae (strain ATCC 700971 / NCTC 13129 / Biotype gravis).